Here is a 198-residue protein sequence, read N- to C-terminus: Small ribosomal subunit protein uS2 (198 aa).

This sequence belongs to the universal ribosomal protein uS2 family.

The sequence is that of Small ribosomal subunit protein uS2 (rps2) from Methanothermobacter thermautotrophicus (strain ATCC 29096 / DSM 1053 / JCM 10044 / NBRC 100330 / Delta H) (Methanobacterium thermoautotrophicum).